The primary structure comprises 485 residues: Aspartyl/glutamyl-tRNA(Asn/Gln) amidotransferase subunit B (485 aa).

The protein belongs to the GatB/GatE family. GatB subfamily. In terms of assembly, heterotrimer of A, B and C subunits.

It carries out the reaction L-glutamyl-tRNA(Gln) + L-glutamine + ATP + H2O = L-glutaminyl-tRNA(Gln) + L-glutamate + ADP + phosphate + H(+). The catalysed reaction is L-aspartyl-tRNA(Asn) + L-glutamine + ATP + H2O = L-asparaginyl-tRNA(Asn) + L-glutamate + ADP + phosphate + 2 H(+). Its function is as follows. Allows the formation of correctly charged Asn-tRNA(Asn) or Gln-tRNA(Gln) through the transamidation of misacylated Asp-tRNA(Asn) or Glu-tRNA(Gln) in organisms which lack either or both of asparaginyl-tRNA or glutaminyl-tRNA synthetases. The reaction takes place in the presence of glutamine and ATP through an activated phospho-Asp-tRNA(Asn) or phospho-Glu-tRNA(Gln). The chain is Aspartyl/glutamyl-tRNA(Asn/Gln) amidotransferase subunit B from Ruminiclostridium cellulolyticum (strain ATCC 35319 / DSM 5812 / JCM 6584 / H10) (Clostridium cellulolyticum).